The sequence spans 279 residues: Diaminopimelate epimerase (279 aa).

Residues Asn-12, Gln-45, and Asn-65 each contribute to the substrate site. Cys-74 acts as the Proton donor in catalysis. Substrate-binding positions include 75-76 (GN), Asn-162, Asn-195, and 213-214 (ER). Cys-222 acts as the Proton acceptor in catalysis. 223–224 (GT) contributes to the substrate binding site.

This sequence belongs to the diaminopimelate epimerase family. Homodimer.

It localises to the cytoplasm. The enzyme catalyses (2S,6S)-2,6-diaminopimelate = meso-2,6-diaminopimelate. It functions in the pathway amino-acid biosynthesis; L-lysine biosynthesis via DAP pathway; DL-2,6-diaminopimelate from LL-2,6-diaminopimelate: step 1/1. Its function is as follows. Catalyzes the stereoinversion of LL-2,6-diaminopimelate (L,L-DAP) to meso-diaminopimelate (meso-DAP), a precursor of L-lysine and an essential component of the bacterial peptidoglycan. The chain is Diaminopimelate epimerase from Shewanella woodyi (strain ATCC 51908 / MS32).